The following is a 113-amino-acid chain: Large ribosomal subunit protein bL17 (113 aa).

This sequence belongs to the bacterial ribosomal protein bL17 family. Part of the 50S ribosomal subunit. Contacts protein L32.

This chain is Large ribosomal subunit protein bL17, found in Clostridium beijerinckii (strain ATCC 51743 / NCIMB 8052) (Clostridium acetobutylicum).